A 193-amino-acid chain; its full sequence is Peptidyl-tRNA hydrolase (193 aa).

Tyr-17 serves as a coordination point for tRNA. Residue His-22 is the Proton acceptor of the active site. Residues Phe-68, Asn-70, and Asn-115 each contribute to the tRNA site.

The protein belongs to the PTH family. Monomer.

Its subcellular location is the cytoplasm. It carries out the reaction an N-acyl-L-alpha-aminoacyl-tRNA + H2O = an N-acyl-L-amino acid + a tRNA + H(+). Functionally, hydrolyzes ribosome-free peptidyl-tRNAs (with 1 or more amino acids incorporated), which drop off the ribosome during protein synthesis, or as a result of ribosome stalling. Its function is as follows. Catalyzes the release of premature peptidyl moieties from peptidyl-tRNA molecules trapped in stalled 50S ribosomal subunits, and thus maintains levels of free tRNAs and 50S ribosomes. The sequence is that of Peptidyl-tRNA hydrolase from Alteromonas mediterranea (strain DSM 17117 / CIP 110805 / LMG 28347 / Deep ecotype).